We begin with the raw amino-acid sequence, 50 residues long: Large ribosomal subunit protein eL40 (50 aa).

The protein belongs to the eukaryotic ribosomal protein eL40 family.

The protein is Large ribosomal subunit protein eL40 of Aeropyrum pernix (strain ATCC 700893 / DSM 11879 / JCM 9820 / NBRC 100138 / K1).